We begin with the raw amino-acid sequence, 212 residues long: Thymidylate kinase (212 aa).

10-17 (GGEGSGKT) is an ATP binding site.

This sequence belongs to the thymidylate kinase family.

It catalyses the reaction dTMP + ATP = dTDP + ADP. Functionally, phosphorylation of dTMP to form dTDP in both de novo and salvage pathways of dTTP synthesis. The protein is Thymidylate kinase of Marinomonas sp. (strain MWYL1).